The sequence spans 193 residues: Pyridoxal 5'-phosphate synthase subunit PdxT (193 aa).

Residue 50-52 coordinates L-glutamine; that stretch reads GES. The active-site Nucleophile is the C82. Residues R109 and 136–137 each bind L-glutamine; that span reads IR. Active-site charge relay system residues include H172 and E174.

It belongs to the glutaminase PdxT/SNO family. As to quaternary structure, in the presence of PdxS, forms a dodecamer of heterodimers. Only shows activity in the heterodimer.

It catalyses the reaction aldehydo-D-ribose 5-phosphate + D-glyceraldehyde 3-phosphate + L-glutamine = pyridoxal 5'-phosphate + L-glutamate + phosphate + 3 H2O + H(+). It carries out the reaction L-glutamine + H2O = L-glutamate + NH4(+). The protein operates within cofactor biosynthesis; pyridoxal 5'-phosphate biosynthesis. Functionally, catalyzes the hydrolysis of glutamine to glutamate and ammonia as part of the biosynthesis of pyridoxal 5'-phosphate. The resulting ammonia molecule is channeled to the active site of PdxS. The polypeptide is Pyridoxal 5'-phosphate synthase subunit PdxT (Streptococcus pneumoniae (strain JJA)).